Here is a 512-residue protein sequence, read N- to C-terminus: DNA-binding protein (512 aa).

Residues 1–105 (MAGRGGSQLE…QDSEDEREAE (105 aa)) are disordered. Over residues 9–21 (LERRRERTPDRGR) the composition is skewed to basic and acidic residues. The segment covering 69 to 78 (QEQPPPPQQP) has biased composition (pro residues). The span at 79–88 (PKKKPRKTKH) shows a compositional bias: basic residues. Residues 96–105 (QDSEDEREAE) are compositionally biased toward acidic residues. Residue Tyr-174 is modified to Phosphotyrosine; by host. The Zn(2+) site is built by Cys-263 and His-265. The segment at 276-310 (IEMDVASENGQRALKENPDRAKVTQNRWGRSVVQL) is flexible loop. Residues Cys-318, Cys-334, Cys-376, Cys-378, Cys-430, and Cys-447 each contribute to the Zn(2+) site. Residues 495–512 (VSLPAGHAETSRQNPFDF) form a C-terminal arm, DBP binding region.

This sequence belongs to the adenoviridae E2A DNA-binding protein family. In terms of assembly, homomultimerizes on viral ssDNA bound to pTP. Forms a initiation complex with viral polymerase, pTP and hosts NFIA and POU2F1/OCT1. Interacts with host SRCAP.

The protein localises to the host nucleus. In terms of biological role, plays a role in the elongation phase of viral strand displacement replication by unwinding the template in an ATP-independent fashion, employing its capacity to form multimers. Also enhances the rate of initiation. Released from template upon second strand synthesis. Assembles in complex with viral pTP, viral pol, host NFIA and host POU2F1/OCT1 on viral origin of replication. Covers the whole ssDNA genome during synthesis. The complementary strand synthesis induces its relese from DNA template. May inhibit cellular transcription mediated by the interaction between host SRCAP and CBP. In Homo sapiens (Human), this protein is DNA-binding protein.